The primary structure comprises 630 residues: ATP-dependent RNA helicase mrh4, mitochondrial (630 aa).

The N-terminal 46 residues, 1-46 (MNRLGGLSLPLRPVCLFCRAQTSLALSPLQGGQAVRSIATGRLRRR), are a transit peptide targeting the mitochondrion. Residues 46-108 (RARMTLSKDV…GETEEKPAMN (63 aa)) form a disordered region. A Q motif motif is present at residues 167–174 (DAVPTPIQ). Residues 195–407 (DDDEPQYEQY…RKLYPDIWRL (213 aa)) form the Helicase ATP-binding domain. Position 208–215 (208–215 (AETGSGKT)) interacts with ATP. Residues 235–255 (EMEKKEEERKVREREENKKNQ) show a composition bias toward basic and acidic residues. Residues 235-265 (EMEKKEEERKVREREENKKNQAFDLEPEIPP) are disordered. A DEAD box motif is present at residues 354 to 357 (DEAD). Residues 452–630 (GSDEAGSPWS…VREVWFGLDS (179 aa)) form the Helicase C-terminal domain.

It belongs to the DEAD box helicase family. MRH4 subfamily.

The protein localises to the mitochondrion. It carries out the reaction ATP + H2O = ADP + phosphate + H(+). In terms of biological role, ATP-binding RNA helicase involved in mitochondrial RNA metabolism. Required for maintenance of mitochondrial DNA. In Emericella nidulans (strain FGSC A4 / ATCC 38163 / CBS 112.46 / NRRL 194 / M139) (Aspergillus nidulans), this protein is ATP-dependent RNA helicase mrh4, mitochondrial (mrh4).